The following is a 195-amino-acid chain: Sec-independent protein translocase protein TatB (195 aa).

Residues 1-21 (MFDIGFSELALIAVVALVVLG) form a helical membrane-spanning segment. The disordered stretch occupies residues 130–195 (EPGSAQPHTP…SSTSPQEKTP (66 aa)). Low complexity-rich tracts occupy residues 145-157 (PVVA…APAP) and 175-195 (TTHA…EKTP).

It belongs to the TatB family. In terms of assembly, the Tat system comprises two distinct complexes: a TatABC complex, containing multiple copies of TatA, TatB and TatC subunits, and a separate TatA complex, containing only TatA subunits. Substrates initially bind to the TatABC complex, which probably triggers association of the separate TatA complex to form the active translocon.

The protein resides in the cell inner membrane. Part of the twin-arginine translocation (Tat) system that transports large folded proteins containing a characteristic twin-arginine motif in their signal peptide across membranes. Together with TatC, TatB is part of a receptor directly interacting with Tat signal peptides. TatB may form an oligomeric binding site that transiently accommodates folded Tat precursor proteins before their translocation. The protein is Sec-independent protein translocase protein TatB of Xanthomonas campestris pv. campestris (strain 8004).